Here is a 126-residue protein sequence, read N- to C-terminus: MADRKCLALIAHDQKKDDLAAFAKANEAVLSKWKIVATGTTGGRVLDVCPALDIVRLKSGPLGGDQQIGALIATGDVDCLIFFVDPLTAMPHDVDVKALMRLAIVYDIPMALNRATAEQLIDFRRN.

One can recognise an MGS-like domain in the interval 1–126 (MADRKCLALI…AEQLIDFRRN (126 aa)). Residues histidine 12, lysine 16, 38 to 41 (TGTT), and 59 to 60 (SG) each bind substrate. Aspartate 65 functions as the Proton donor/acceptor in the catalytic mechanism. A substrate-binding site is contributed by histidine 92.

Belongs to the methylglyoxal synthase family.

It carries out the reaction dihydroxyacetone phosphate = methylglyoxal + phosphate. Its function is as follows. Catalyzes the formation of methylglyoxal from dihydroxyacetone phosphate. The protein is Methylglyoxal synthase of Rhizobium meliloti (strain 1021) (Ensifer meliloti).